The primary structure comprises 132 residues: Intraflagellar transport protein 20 homolog B (132 aa).

Residues 87-112 are a coiled coil; it reads EAQQQQLYALIAEKKMQLERYRIEYD.

The protein localises to the golgi apparatus. It localises to the cis-Golgi network. It is found in the cytoplasm. The protein resides in the cytoskeleton. Its subcellular location is the microtubule organizing center. The protein localises to the centrosome. It localises to the centriole. It is found in the cell projection. The protein resides in the cilium. In terms of biological role, involved in ciliary process assembly. May play a role in the trafficking of ciliary membrane proteins from the Golgi complex to the cilium. Regulates the platelet-derived growth factor receptor-alpha (PDGFRA) signaling pathway. Plays an important role in spermatogenesis, particularly spermiogenesis, when germ cells form flagella. This is Intraflagellar transport protein 20 homolog B (ift20-b) from Xenopus laevis (African clawed frog).